The following is a 405-amino-acid chain: Riboflavin biosynthesis protein RibBA (405 aa).

The segment at 1–205 is DHBP synthase; that stretch reads MEQIKLDSIA…IKDLIEYRLT (205 aa). D-ribulose 5-phosphate is bound by residues 30 to 31, Asp35, 144 to 148, and Glu168; these read RE and RVGHT. A Mg(2+)-binding site is contributed by Glu31. His147 lines the Mg(2+) pocket. Residues 206 to 405 form a GTP cyclohydrolase II region; the sequence is HESLVKREIG…KMGHTILKKD (200 aa). A GTP-binding site is contributed by 256–260; it reads RVHSS. Residues Cys261, Cys272, and Cys274 each contribute to the Zn(2+) site. GTP contacts are provided by residues Gln277, 299-301, and Thr321; that span reads EGR. Asp333 acts as the Proton acceptor; for GTP cyclohydrolase activity in catalysis. Arg335 functions as the Nucleophile; for GTP cyclohydrolase activity in the catalytic mechanism. The GTP site is built by Thr356 and Lys361.

It in the N-terminal section; belongs to the DHBP synthase family. In the C-terminal section; belongs to the GTP cyclohydrolase II family. Mg(2+) is required as a cofactor. It depends on Mn(2+) as a cofactor. Zn(2+) serves as cofactor.

The catalysed reaction is D-ribulose 5-phosphate = (2S)-2-hydroxy-3-oxobutyl phosphate + formate + H(+). It catalyses the reaction GTP + 4 H2O = 2,5-diamino-6-hydroxy-4-(5-phosphoribosylamino)-pyrimidine + formate + 2 phosphate + 3 H(+). The protein operates within cofactor biosynthesis; riboflavin biosynthesis; 2-hydroxy-3-oxobutyl phosphate from D-ribulose 5-phosphate: step 1/1. Its pathway is cofactor biosynthesis; riboflavin biosynthesis; 5-amino-6-(D-ribitylamino)uracil from GTP: step 1/4. Catalyzes the conversion of D-ribulose 5-phosphate to formate and 3,4-dihydroxy-2-butanone 4-phosphate. Its function is as follows. Catalyzes the conversion of GTP to 2,5-diamino-6-ribosylamino-4(3H)-pyrimidinone 5'-phosphate (DARP), formate and pyrophosphate. The chain is Riboflavin biosynthesis protein RibBA from Cytophaga hutchinsonii (strain ATCC 33406 / DSM 1761 / CIP 103989 / NBRC 15051 / NCIMB 9469 / D465).